The following is a 185-amino-acid chain: dCTP deaminase (185 aa).

DCTP contacts are provided by residues 107–112, 131–133, Gln-152, Tyr-166, and Gln-176; these read KSTYAR and TLE. The Proton donor/acceptor role is filled by Glu-133.

The protein belongs to the dCTP deaminase family. Homotrimer.

The enzyme catalyses dCTP + H2O + H(+) = dUTP + NH4(+). The protein operates within pyrimidine metabolism; dUMP biosynthesis; dUMP from dCTP (dUTP route): step 1/2. Functionally, catalyzes the deamination of dCTP to dUTP. This is dCTP deaminase from Wolbachia pipientis wMel.